The primary structure comprises 563 residues: TSET complex member tstC (563 aa).

5 disordered regions span residues 146 to 170 (SPHQ…SFIT), 192 to 213 (NSLS…NNDS), 235 to 298 (VLNS…NYNN), 376 to 395 (HPNA…NEFK), and 428 to 563 (GSAS…FLNF). The segment covering 379 to 395 (AGKEAKEKEKEKENEFK) has biased composition (basic and acidic residues). Residues 428 to 459 (GSASSKSSPSTSPLSSSYNPSSPETSENSFSA) show a composition bias toward low complexity. Residues 460–473 (TPISDSNSLKNSID) are compositionally biased toward polar residues. Low complexity-rich tracts occupy residues 474–487 (NNNN…NNNN) and 507–543 (NNSK…SSAA). The span at 552-563 (NSAKTKMNFLNF) shows a compositional bias: polar residues.

Component of the TSET complex, a heterohexamer composed of tstA, tstB, tstC, tstD, tstE and tstF, which may act in plasma membrane turnover. tstA, tstB, tstC and tstD are likely to be the core complex members with tstE and tstF acting as associated scaffold proteins.

This Dictyostelium discoideum (Social amoeba) protein is TSET complex member tstC.